Here is a 496-residue protein sequence, read N- to C-terminus: Glycerol kinase (496 aa).

Thr-12 is an ADP binding site. Residues Thr-12, Thr-13, and Ser-14 each contribute to the ATP site. Residue Thr-12 coordinates sn-glycerol 3-phosphate. Arg-16 contributes to the ADP binding site. Arg-82, Glu-83, and Tyr-134 together coordinate sn-glycerol 3-phosphate. Glycerol is bound by residues Arg-82, Glu-83, and Tyr-134. His-230 is modified (phosphohistidine; by HPr). Asp-244 provides a ligand contact to sn-glycerol 3-phosphate. Asp-244 and Gln-245 together coordinate glycerol. The ADP site is built by Thr-266 and Gly-309. ATP is bound by residues Thr-266, Gly-309, Gln-313, and Gly-410. Residues Gly-410 and Asn-414 each coordinate ADP.

It belongs to the FGGY kinase family. As to quaternary structure, homotetramer and homodimer (in equilibrium). In terms of processing, the phosphoenolpyruvate-dependent sugar phosphotransferase system (PTS), including enzyme I, and histidine-containing protein (HPr) are required for the phosphorylation, which leads to the activation of the enzyme.

The enzyme catalyses glycerol + ATP = sn-glycerol 3-phosphate + ADP + H(+). The protein operates within polyol metabolism; glycerol degradation via glycerol kinase pathway; sn-glycerol 3-phosphate from glycerol: step 1/1. Activated by phosphorylation and inhibited by fructose 1,6-bisphosphate (FBP). Functionally, key enzyme in the regulation of glycerol uptake and metabolism. Catalyzes the phosphorylation of glycerol to yield sn-glycerol 3-phosphate. The sequence is that of Glycerol kinase from Bacillus thuringiensis (strain Al Hakam).